The chain runs to 104 residues: Large ribosomal subunit protein bL21 (104 aa).

It belongs to the bacterial ribosomal protein bL21 family. In terms of assembly, part of the 50S ribosomal subunit. Contacts protein L20.

This protein binds to 23S rRNA in the presence of protein L20. The sequence is that of Large ribosomal subunit protein bL21 from Clostridium botulinum (strain ATCC 19397 / Type A).